A 1066-amino-acid polypeptide reads, in one-letter code: MAPAPSAAGVPATVPAKAVKGAAGAAAKAGAAAEKKEASAETDALLSGDKDAAQELTNLVKIEGPAALANLGIEAVILKGLGDKKNATAREGACTLLANLCEQGVGHEVEPFIFENVLNSLVEAMGDKEKAVQKASLETLKAFVRVMSPWAAQQVLKVVLHQARTAGKWQVKTGCVALLEEMVTACPERMAALMPEIIPVMTEVIWDTKTDVQKASRAALTKLCALISNKDIERFIPALINSLIHPVEEVPKTIQLLSATTFVQEVDSATLALMVPLLSRGLNERPTATKRKVAVIIDNMTKLVDNERTVRPFLGKLLPGLIKIESTLADPEARSVVQRAIKTLREVGKVTGDGSDVKPLEDVDIKATQEQVNKALGEQSLQAQADLSSYLAVLVANLANARNFELTEWESTLIPYITLIKGSKPEQAKAVAKSLLTALAKSTGDTVEIFDDEEEGEDLCNCQFSLAYGAKILLNTATLRLKRGHKYGLCGRNGSGKSTLMRAITNGQVEGFPSPDEVRTWYVEHDLDGSEGLMTVLEFILADERLSMTRDEAVATLHEVGFDDARQNSPIAGLSGGWKMKVALARAILFKADILLLDEPTNHLDVVNVKWITDYLVNLKTATAIIVSHDSKFLNDVCTDILHLNRFKIKRYPGNLDAFVKRVPEARAYAELNTGEDYSFKLPDPPLLDGVKTKEKSLIKMKDVVFQYPGTPAPQLRGVSIQLSLASRVAILGPNGSGKSTLVKLIVGDTEPGSGEMWKHPNLVIGYVAQHAFHHIDQHLDKTPLDYMLWRYQTGEDLEEHMKANRALTAEEEAAKKQGEVFVIEGVKRLFDEIVGRKKLKNSFQYEVSFKNMSSADNQWVPRDDLINRGLERAVLAFDSKEAQRLGMNRPLVRKEIENHFEDFGLEREFTSHNTMRGLSGGQKVKVVLAAATWRRPHIIILDEPTNFLDRESLAALIKAIESFQGGVGIITHSKEFSEGTCKEIWAMNDGVLVASGHDWTESNSKGTKLEKKEEDDEYTDAMGNVHKKEKKAKKESASDRRKAKKDRMARKKAGTYDSADELEDL.

HEAT repeat units follow at residues 112–149, 151–188, 192–229, 231–268, 269–306, and 312–353; these read FIFENVLNSLVEAMGDKEKAVQKASLETLKAFVRVMSP, AAQQVLKVVLHQARTAGKWQVKTGCVALLEEMVTACPE, ALMPEIIPVMTEVIWDTKTDVQKASRAALTKLCALISN, DIERFIPALINSLIHPVEEVPKTIQLLSATTFVQEVDS, ATLALMVPLLSRGLNERPTATKRKVAVIIDNMTKLVDN, and PFLG…VTGD. Residue T418 participates in ADP binding. 2 ABC transporter domains span residues 454–672 and 699–1015; these read EEGE…YAEL and IKMK…KKEE. Positions 735, 944, 947, and 973 each coordinate ADP. Positions 997-1066 are disordered; the sequence is GHDWTESNSK…YDSADELEDL (70 aa). The segment covering 1042-1054 has biased composition (basic residues); the sequence is RKAKKDRMARKKA.

This sequence belongs to the ABC transporter superfamily. ABCF family. EF3 subfamily.

The protein localises to the cytoplasm. Its subcellular location is the cytosol. It carries out the reaction ATP + H2O = ADP + phosphate + H(+). The protein operates within protein biosynthesis; polypeptide chain elongation. Its function is as follows. Ribosome-dependent ATPase that functions in cytoplasmic translation elongation. Required for the ATP-dependent release of deacylated tRNA from the ribosomal E-site during protein biosynthesis. Stimulates the eEF1A-dependent binding of aminoacyl-tRNA to the ribosomal A-site, which has reduced affinity for tRNA as long as the E-site is occupied. Assists translation termination by stimulating the release of nascent protein from the ribosome by release factors. The chain is Elongation factor 3 from Mycosarcoma maydis (Corn smut fungus).